The chain runs to 515 residues: Maturase K (515 aa).

The protein belongs to the intron maturase 2 family. MatK subfamily.

It localises to the plastid. The protein resides in the chloroplast. In terms of biological role, usually encoded in the trnK tRNA gene intron. Probably assists in splicing its own and other chloroplast group II introns. The sequence is that of Maturase K from Pinus banksiana (Jack pine).